Consider the following 159-residue polypeptide: NADH-quinone oxidoreductase subunit I (159 aa).

2 4Fe-4S ferredoxin-type domains span residues 51 to 80 (RRYESGEERCIACKLCEAICPAQAIVIEAD) and 90 to 119 (TRYDIDMTKCIYCGLCQEACPVDAIVEGPN). Residues Cys-60, Cys-63, Cys-66, Cys-70, Cys-99, Cys-102, Cys-105, and Cys-109 each coordinate [4Fe-4S] cluster.

The protein belongs to the complex I 23 kDa subunit family. NDH-1 is composed of 14 different subunits. Subunits NuoA, H, J, K, L, M, N constitute the membrane sector of the complex. [4Fe-4S] cluster is required as a cofactor.

Its subcellular location is the cell inner membrane. The catalysed reaction is a quinone + NADH + 5 H(+)(in) = a quinol + NAD(+) + 4 H(+)(out). In terms of biological role, NDH-1 shuttles electrons from NADH, via FMN and iron-sulfur (Fe-S) centers, to quinones in the respiratory chain. The immediate electron acceptor for the enzyme in this species is believed to be ubiquinone. Couples the redox reaction to proton translocation (for every two electrons transferred, four hydrogen ions are translocated across the cytoplasmic membrane), and thus conserves the redox energy in a proton gradient. This Rickettsia akari (strain Hartford) protein is NADH-quinone oxidoreductase subunit I.